The following is a 309-amino-acid chain: Ribonuclease Z (309 aa).

Zn(2+) is bound by residues histidine 63, histidine 65, aspartate 67, histidine 68, histidine 145, aspartate 216, and histidine 274. Aspartate 67 acts as the Proton acceptor in catalysis.

The protein belongs to the RNase Z family. Homodimer. The cofactor is Zn(2+).

It catalyses the reaction Endonucleolytic cleavage of RNA, removing extra 3' nucleotides from tRNA precursor, generating 3' termini of tRNAs. A 3'-hydroxy group is left at the tRNA terminus and a 5'-phosphoryl group is left at the trailer molecule.. In terms of biological role, zinc phosphodiesterase, which displays some tRNA 3'-processing endonuclease activity. Probably involved in tRNA maturation, by removing a 3'-trailer from precursor tRNA. The sequence is that of Ribonuclease Z from Streptococcus agalactiae serotype V (strain ATCC BAA-611 / 2603 V/R).